We begin with the raw amino-acid sequence, 136 residues long: ATP synthase epsilon chain, chloroplastic (136 aa).

Belongs to the ATPase epsilon chain family. As to quaternary structure, F-type ATPases have 2 components, CF(1) - the catalytic core - and CF(0) - the membrane proton channel. CF(1) has five subunits: alpha(3), beta(3), gamma(1), delta(1), epsilon(1). CF(0) has three main subunits: a, b and c.

It is found in the plastid. Its subcellular location is the chloroplast thylakoid membrane. Its function is as follows. Produces ATP from ADP in the presence of a proton gradient across the membrane. The sequence is that of ATP synthase epsilon chain, chloroplastic from Chaetosphaeridium globosum (Charophycean green alga).